Here is a 513-residue protein sequence, read N- to C-terminus: RNA-splicing ligase RtcB homolog (513 aa).

The Mn(2+) site is built by Asp-127, Cys-130, His-235, His-267, and His-361. GMP is bound at residue 234–238 (NHYAE). GMP contacts are provided by residues 361-362 (HN), 410-413 (GGTM), Ser-417, 436-439 (HGAG), and Lys-512. His-436 acts as the GMP-histidine intermediate in catalysis.

Belongs to the RtcB family. In terms of assembly, catalytic component of the tRNA-splicing ligase complex. Mn(2+) is required as a cofactor.

It catalyses the reaction a 3'-end 3'-phospho-ribonucleotide-RNA + a 5'-end dephospho-ribonucleoside-RNA + GTP = a ribonucleotidyl-ribonucleotide-RNA + GMP + diphosphate. The catalysed reaction is a 3'-end 2',3'-cyclophospho-ribonucleotide-RNA + a 5'-end dephospho-ribonucleoside-RNA + GTP + H2O = a ribonucleotidyl-ribonucleotide-RNA + GMP + diphosphate + H(+). Functionally, catalytic subunit of the tRNA-splicing ligase complex that acts by directly joining spliced tRNA halves to mature-sized tRNAs by incorporating the precursor-derived splice junction phosphate into the mature tRNA as a canonical 3',5'-phosphodiester. May act as an RNA ligase with broad substrate specificity, and may function toward other RNAs. The protein is RNA-splicing ligase RtcB homolog of Micromonas commoda (strain RCC299 / NOUM17 / CCMP2709) (Picoplanktonic green alga).